A 100-amino-acid polypeptide reads, in one-letter code: Large ribosomal subunit protein uL23 (100 aa).

Belongs to the universal ribosomal protein uL23 family. Part of the 50S ribosomal subunit. Contacts protein L29, and trigger factor when it is bound to the ribosome.

Its function is as follows. One of the early assembly proteins it binds 23S rRNA. One of the proteins that surrounds the polypeptide exit tunnel on the outside of the ribosome. Forms the main docking site for trigger factor binding to the ribosome. The chain is Large ribosomal subunit protein uL23 from Shewanella amazonensis (strain ATCC BAA-1098 / SB2B).